The sequence spans 183 residues: Small ribosomal subunit protein uS4c (183 aa).

Residues 82–143 (MRLDNILFRL…KQRSKALIQN (62 aa)) enclose the S4 RNA-binding domain.

The protein belongs to the universal ribosomal protein uS4 family. Part of the 30S ribosomal subunit. Contacts protein S5. The interaction surface between S4 and S5 is involved in control of translational fidelity.

It is found in the plastid. The protein localises to the chloroplast. In terms of biological role, one of the primary rRNA binding proteins, it binds directly to 16S rRNA where it nucleates assembly of the body of the 30S subunit. Functionally, with S5 and S12 plays an important role in translational accuracy. The protein is Small ribosomal subunit protein uS4c (rps4) of Schizorhiza neglecta (Lapeirousia neglecta).